Here is a 591-residue protein sequence, read N- to C-terminus: V-type ATP synthase alpha chain (591 aa).

An ATP-binding site is contributed by 233 to 240; it reads GPFGAGKT.

Belongs to the ATPase alpha/beta chains family.

It carries out the reaction ATP + H2O + 4 H(+)(in) = ADP + phosphate + 5 H(+)(out). In terms of biological role, produces ATP from ADP in the presence of a proton gradient across the membrane. The V-type alpha chain is a catalytic subunit. This chain is V-type ATP synthase alpha chain, found in Streptococcus pyogenes serotype M1.